A 90-amino-acid chain; its full sequence is Auxin-responsive protein SAUR23 (90 aa).

This sequence belongs to the ARG7 family.

Its subcellular location is the cell membrane. In terms of biological role, functions as a positive effector of cell expansion through modulation of auxin transport. This Arabidopsis thaliana (Mouse-ear cress) protein is Auxin-responsive protein SAUR23.